Here is a 307-residue protein sequence, read N- to C-terminus: GTPase Era (307 aa).

The Era-type G domain occupies 17–186; it reads RCGFVAIVGR…LELIKPYLPE (170 aa). A G1 region spans residues 25–32; sequence GRPNVGKS. Position 25–32 (25–32) interacts with GTP; the sequence is GRPNVGKS. The segment at 51–55 is G2; it reads QTTRN. A G3 region spans residues 72–75; the sequence is DTPG. Residues 72 to 76 and 133 to 136 each bind GTP; these read DTPGF and NKID. Residues 133-136 are G4; it reads NKID. Residues 165-167 are G5; sequence VSA. A KH type-2 domain is found at 217–293; the sequence is LGEELPYAMN…FLKVWVKVKS (77 aa).

This sequence belongs to the TRAFAC class TrmE-Era-EngA-EngB-Septin-like GTPase superfamily. Era GTPase family. As to quaternary structure, monomer.

Its subcellular location is the cytoplasm. It is found in the cell inner membrane. In terms of biological role, an essential GTPase that binds both GDP and GTP, with rapid nucleotide exchange. Plays a role in 16S rRNA processing and 30S ribosomal subunit biogenesis and possibly also in cell cycle regulation and energy metabolism. The chain is GTPase Era from Neisseria meningitidis serogroup B (strain ATCC BAA-335 / MC58).